The chain runs to 139 residues: Small ribosomal subunit protein bS6 (139 aa).

Positions A95 to D121 are enriched in basic and acidic residues. A disordered region spans residues A95 to E139. Over residues E124 to E139 the composition is skewed to acidic residues.

The protein belongs to the bacterial ribosomal protein bS6 family.

Functionally, binds together with bS18 to 16S ribosomal RNA. The sequence is that of Small ribosomal subunit protein bS6 from Pseudomonas aeruginosa (strain LESB58).